A 251-amino-acid chain; its full sequence is uncharacterized protein (251 aa).

To M.jannaschii MJ0638 and MJ1123 and M.tuberculosis Rv2003c.

This is an uncharacterized protein from Methanocaldococcus jannaschii (strain ATCC 43067 / DSM 2661 / JAL-1 / JCM 10045 / NBRC 100440) (Methanococcus jannaschii).